Consider the following 337-residue polypeptide: Protein ABHD13 (337 aa).

The helical; Signal-anchor for type II membrane protein transmembrane segment at 37-57 (FHLYGGIVLLLLIFVSIAGIL) threads the bilayer. Residues S193, D268, and H298 each act as charge relay system in the active site. N-linked (GlcNAc...) asparagine glycosylation occurs at N299.

The protein belongs to the serine esterase family.

It localises to the membrane. The protein is Protein ABHD13 of Mus musculus (Mouse).